A 240-amino-acid polypeptide reads, in one-letter code: Protein OXIDATIVE STRESS 3 LIKE 4 (240 aa).

The disordered stretch occupies residues 1-128; the sequence is MELMAKPTFS…SKSFGNLGEI (128 aa). Positions 51-66 are enriched in polar residues; it reads WSGQTADYSSDSSSIG. The segment covering 70 to 84 has biased composition (acidic residues); it reads DSEEDEEESENENDD. The short motif at 142-150 is the Nuclear localization signal element; it reads NKRRRLQIC. A disordered region spans residues 163–207; sequence NPKSMPLLPVNEDEDDDDEDDDEEDLKSGFDENKSSSDEEGVKKV. Residues 173 to 187 are compositionally biased toward acidic residues; the sequence is NEDEDDDDEDDDEED. Positions 188-205 are enriched in basic and acidic residues; that stretch reads LKSGFDENKSSSDEEGVK. Positions 202–229 are kinase-inducible domain (KID); it reads EGVKKVVVRKGSFKNRAYKSRSCFALSD. S213 carries the post-translational modification Phosphoserine.

Interacts with HDA19; Ser-213 is critical for this interaction.

The protein localises to the nucleus. In terms of biological role, transcription activator which may regulates gene expression through interaction with the histone deacetylase HDA19. Promotes slightly the tolerance to cadmium (Cd) and to oxidizing chemicals (e.g. diamide and tert-butyl hydroperoxide (t-BOOH)). This is Protein OXIDATIVE STRESS 3 LIKE 4 from Arabidopsis thaliana (Mouse-ear cress).